A 366-amino-acid polypeptide reads, in one-letter code: Aminomethyltransferase (366 aa).

It belongs to the GcvT family. In terms of assembly, the glycine cleavage system is composed of four proteins: P, T, L and H.

It carries out the reaction N(6)-[(R)-S(8)-aminomethyldihydrolipoyl]-L-lysyl-[protein] + (6S)-5,6,7,8-tetrahydrofolate = N(6)-[(R)-dihydrolipoyl]-L-lysyl-[protein] + (6R)-5,10-methylene-5,6,7,8-tetrahydrofolate + NH4(+). Functionally, the glycine cleavage system catalyzes the degradation of glycine. The protein is Aminomethyltransferase of Bacillus cereus (strain G9842).